A 146-amino-acid chain; its full sequence is Hemoglobin subunit beta-1/2 (146 aa).

In terms of domain architecture, Globin spans 2–146; that stretch reads EWTDKERSII…VVSALGKQYH (145 aa). Heme b-binding residues include His-63 and His-92.

Belongs to the globin family. As to quaternary structure, hb1 is a heterotetramer of two alpha-1 chains and two beta chains. Hb2 is a heterotetramer of two alpha-2 chains and two beta chains. Red blood cells.

Functionally, involved in oxygen transport from gills to the various peripheral tissues. This is Hemoglobin subunit beta-1/2 from Trematomus newnesi (Dusky notothen).